The primary structure comprises 102 residues: Small ribosomal subunit protein uS10 (102 aa).

This sequence belongs to the universal ribosomal protein uS10 family. In terms of assembly, part of the 30S ribosomal subunit.

In terms of biological role, involved in the binding of tRNA to the ribosomes. This chain is Small ribosomal subunit protein uS10, found in Cupriavidus metallidurans (strain ATCC 43123 / DSM 2839 / NBRC 102507 / CH34) (Ralstonia metallidurans).